A 498-amino-acid chain; its full sequence is ATP synthase subunit beta, chloroplastic (498 aa).

Residue 172–179 (GGAGVGKT) participates in ATP binding.

This sequence belongs to the ATPase alpha/beta chains family. As to quaternary structure, F-type ATPases have 2 components, CF(1) - the catalytic core - and CF(0) - the membrane proton channel. CF(1) has five subunits: alpha(3), beta(3), gamma(1), delta(1), epsilon(1). CF(0) has four main subunits: a(1), b(1), b'(1) and c(9-12).

The protein localises to the plastid. It is found in the chloroplast thylakoid membrane. It catalyses the reaction ATP + H2O + 4 H(+)(in) = ADP + phosphate + 5 H(+)(out). Produces ATP from ADP in the presence of a proton gradient across the membrane. The catalytic sites are hosted primarily by the beta subunits. The sequence is that of ATP synthase subunit beta, chloroplastic from Cinnamomum camphora (Camphor tree).